The chain runs to 306 residues: UDP-3-O-acyl-N-acetylglucosamine deacetylase (306 aa).

Zn(2+) contacts are provided by H79, H238, and D242. H265 serves as the catalytic Proton donor.

The protein belongs to the LpxC family. It depends on Zn(2+) as a cofactor.

It carries out the reaction a UDP-3-O-[(3R)-3-hydroxyacyl]-N-acetyl-alpha-D-glucosamine + H2O = a UDP-3-O-[(3R)-3-hydroxyacyl]-alpha-D-glucosamine + acetate. The protein operates within glycolipid biosynthesis; lipid IV(A) biosynthesis; lipid IV(A) from (3R)-3-hydroxytetradecanoyl-[acyl-carrier-protein] and UDP-N-acetyl-alpha-D-glucosamine: step 2/6. Functionally, catalyzes the hydrolysis of UDP-3-O-myristoyl-N-acetylglucosamine to form UDP-3-O-myristoylglucosamine and acetate, the committed step in lipid A biosynthesis. This Shewanella oneidensis (strain ATCC 700550 / JCM 31522 / CIP 106686 / LMG 19005 / NCIMB 14063 / MR-1) protein is UDP-3-O-acyl-N-acetylglucosamine deacetylase.